Reading from the N-terminus, the 474-residue chain is MALAVAPWGRQWEEARALGRAVRMLQRLEEQCVDPRLSVSPPSLRDLLPRTAQLLREVAHSRRAAGGGGPGGPGGSGDFLLIYLANLEAKSRQVAALLPPRGRRSANDELFRAGSRLRRQLAKLAIIFSHMHAELHALFPGGKYCGHMYQLTKAPAHTFWRESCGARCVLPWAEFESLLGTCHPVEPGCTALALRTTIDLTCSGHVSIFEFDVFTRLFQPWPTLLKNWQLLAVNHPGYMAFLTYDEVQERLQACRDKPGSYIFRPSCTRLGQWAIGYVSSDGSILQTIPANKPLSQVLLEGQKDGFYLYPDGKTHNPDLTELGQAEPQQRIHVSEEQLQLYWAMDSTFELCKICAESNKDVKIEPCGHLLCSCCLAAWQHSDSQTCPFCRCEIKGWEAVSIYQFHGQATAEDSGNSSDQEGRELELGQVPLSAPPLPPRPDLPPRKPRNAQPKVRLLKGNSPPAALGPQDPAPA.

The interval 7–145 is 4H; sequence PWGRQWEEAR…HALFPGGKYC (139 aa). Positions 7-321 constitute a Cbl-PTB domain; the sequence is PWGRQWEEAR…GKTHNPDLTE (315 aa). Positions 146–218 are EF-hand-like; it reads GHMYQLTKAP…FEFDVFTRLF (73 aa). 3 residues coordinate Ca(2+): aspartate 199, threonine 201, and glutamate 210. Residues 219–321 form an SH2-like region; that stretch reads QPWPTLLKNW…GKTHNPDLTE (103 aa). A 4-O-phospho-L-tyrosine-binding site is contributed by arginine 264. Residues 322–350 are linker; it reads LGQAEPQQRIHVSEEQLQLYWAMDSTFEL. The residue at position 341 (tyrosine 341) is a Phosphotyrosine; by SRC. An RING-type zinc finger spans residues 351–390; it reads CKICAESNKDVKIEPCGHLLCSCCLAAWQHSDSQTCPFCR. The segment at 351 to 474 is interaction with RET; the sequence is CKICAESNKD…ALGPQDPAPA (124 aa). The tract at residues 409–474 is disordered; that stretch reads TAEDSGNSSD…ALGPQDPAPA (66 aa). A compositionally biased stretch (pro residues) spans 432-441; the sequence is SAPPLPPRPD.

Interacts with ubiquitin-conjugating enzyme E2 UBE2D2 and UBE2D3. Isoform 1 interacts with EGFR (tyrosine phosphorylated). Interacts with the SH3 domain proteins LYN and CRK. Interacts (via RING-type zinc finger) with TGFB1I1 (via LIM zinc-binding domain 2); the interaction is direct and enhances the E3 activity. Interacts directly with RET (inactive) and CD2AP; dissociates from RET upon RET activation by GDNF which also increases the interaction with CD2AP suggesting dissociation as CBLC:CD2AP complex. Interacts with SRC; the interaction is enhanced when SRC is phosphorylated at 'Tyr-419'. In terms of processing, phosphorylated on multiple tyrosine residues by SRC. Isoform 1, but not isoform 2, is phosphorylated on tyrosines by EGFR. Post-translationally, autoubiquitinated when phosphorylated at Tyr-341, enhanced by SRC; suggesting proteasomal degradation. As to expression, ubiquitous.

The catalysed reaction is S-ubiquitinyl-[E2 ubiquitin-conjugating enzyme]-L-cysteine + [acceptor protein]-L-lysine = [E2 ubiquitin-conjugating enzyme]-L-cysteine + N(6)-ubiquitinyl-[acceptor protein]-L-lysine.. Its activity is regulated as follows. Phosphorylation at Tyr-341 is necessary and sufficient for the activation of E3 activity. Its function is as follows. Acts as an E3 ubiquitin-protein ligase, which accepts ubiquitin from specific E2 ubiquitin-conjugating enzymes, and then transfers it to substrates promoting their degradation by the proteasome. Functionally coupled with the E2 ubiquitin-protein ligases UB2D1, UB2D2 and UB2D3. Regulator of EGFR mediated signal transduction; upon EGF activation, ubiquitinates EGFR. Isoform 1, but not isoform 2, inhibits EGF stimulated MAPK1 activation. Promotes ubiquitination of SRC phosphorylated at 'Tyr-419'. In collaboration with CD2AP may act as regulatory checkpoint for Ret signaling by modulating the rate of RET degradation after ligand activation; CD2AP converts it from an inhibitor to a promoter of RET degradation; the function limits the potency of GDNF on neuronal survival. The polypeptide is E3 ubiquitin-protein ligase CBL-C (CBLC) (Homo sapiens (Human)).